We begin with the raw amino-acid sequence, 242 residues long: Terpene cyclase cle7 (242 aa).

7 helical membrane-spanning segments follow: residues 20–40, 50–69, 79–101, 117–137, 143–163, 172–192, and 207–227; these read LLLT…ITTI, GVSL…FAIL, VILR…FARS, LFVL…SVLL, FYWS…GILV, SYGM…SLFL, and ILMR…GVCF.

This sequence belongs to the paxB family.

Its subcellular location is the membrane. The protein operates within secondary metabolite biosynthesis; terpenoid biosynthesis. Functionally, non-reducing polyketide synthase; part of the cluster A that mediates the biosynthesis of chevalone E and its oxidized derivatives that possess a unique five-membered lactone ring and can synergistically enhance the cytotoxicity of doxorubicin (DOX) in breast cancer cells. Within the pathway, cle7 takes part to the biosynthesis of the molecular scaffold by catalyzing the cyclization of the prenyl group initiated by protonation and ring-opening of the epoxide to produce the chevalone E intermediate. The molecular scaffold is commonly biosynthesized by a series of enzymes including the non-reducing polyketide synthase (NR-PKS) cle1 that produces the alpha-pyrone triacetic acid lactone (TAL); The membrane-bound prenyltransferase cle5 that accepts TAL as its substrate to perform a C-3 geranylgeranylation reaction, in which the pathway-dedicated GGPS cle6 is required to provide GGPP, the other substrate of cle5; the FAD-dependent monooxygenase Cle3 that forms an (S)-epoxide ring at the terminal olefin of the geranylgeranyl group; and the terpene cyclase Cle7 that catalyzes the cyclization of the prenyl group that yields the pentacyclic pathway intermediate chevalone E. Chevalone E can derivatize into seven new oxidized analogs by the cytochrome P450 monooxygenases cle2 (acting at C-20) and cle4 (acting at C-11 and C-12). In Aspergillus versicolor, this protein is Terpene cyclase cle7.